Reading from the N-terminus, the 1798-residue chain is U3 small nucleolar RNA-associated protein 10 (1798 aa).

An HEAT 1 repeat occupies 583–620 (LDFQALLPFLLVTLTDPSERVRREAAAALAAVGSLYKK). Helical transmembrane passes span 942–962 (IQSG…AIVN) and 998–1018 (ALLL…HSVM). HEAT repeat units follow at residues 1042–1079 (QTID…AFEH), 1249–1286 (LTLV…QNPE), 1293–1331 (IRVL…KYGK), and 1754–1791 (ALLP…VLGE).

It belongs to the HEATR1/UTP10 family. Component of the ribosomal small subunit (SSU) processome.

It localises to the nucleus. Its subcellular location is the nucleolus. The protein localises to the membrane. In terms of biological role, involved in nucleolar processing of pre-18S ribosomal RNA. Involved in ribosome biosynthesis. This Aspergillus fumigatus (strain ATCC MYA-4609 / CBS 101355 / FGSC A1100 / Af293) (Neosartorya fumigata) protein is U3 small nucleolar RNA-associated protein 10.